Here is an 88-residue protein sequence, read N- to C-terminus: Small ribosomal subunit protein uS15 (88 aa).

Residues 1–12 are compositionally biased toward basic and acidic residues; that stretch reads MITQEEQQKIID. The segment at 1–24 is disordered; sequence MITQEEQQKIIDRFGNGPNDTGTP.

Belongs to the universal ribosomal protein uS15 family. Part of the 30S ribosomal subunit. Forms a bridge to the 50S subunit in the 70S ribosome, contacting the 23S rRNA.

In terms of biological role, one of the primary rRNA binding proteins, it binds directly to 16S rRNA where it helps nucleate assembly of the platform of the 30S subunit by binding and bridging several RNA helices of the 16S rRNA. Functionally, forms an intersubunit bridge (bridge B4) with the 23S rRNA of the 50S subunit in the ribosome. This is Small ribosomal subunit protein uS15 from Salinibacter ruber (strain DSM 13855 / M31).